The following is a 120-amino-acid chain: Large ribosomal subunit protein uL18 (120 aa).

It belongs to the universal ribosomal protein uL18 family. In terms of assembly, part of the 50S ribosomal subunit; part of the 5S rRNA/L5/L18/L25 subcomplex. Contacts the 5S and 23S rRNAs.

Its function is as follows. This is one of the proteins that bind and probably mediate the attachment of the 5S RNA into the large ribosomal subunit, where it forms part of the central protuberance. The sequence is that of Large ribosomal subunit protein uL18 from Rhizobium leguminosarum bv. trifolii (strain WSM2304).